A 352-amino-acid polypeptide reads, in one-letter code: UDP-3-O-acylglucosamine N-acyltransferase (352 aa).

The active-site Proton acceptor is H242.

The protein belongs to the transferase hexapeptide repeat family. LpxD subfamily. In terms of assembly, homotrimer.

The enzyme catalyses a UDP-3-O-[(3R)-3-hydroxyacyl]-alpha-D-glucosamine + a (3R)-hydroxyacyl-[ACP] = a UDP-2-N,3-O-bis[(3R)-3-hydroxyacyl]-alpha-D-glucosamine + holo-[ACP] + H(+). Its pathway is bacterial outer membrane biogenesis; LPS lipid A biosynthesis. Functionally, catalyzes the N-acylation of UDP-3-O-acylglucosamine using 3-hydroxyacyl-ACP as the acyl donor. Is involved in the biosynthesis of lipid A, a phosphorylated glycolipid that anchors the lipopolysaccharide to the outer membrane of the cell. The polypeptide is UDP-3-O-acylglucosamine N-acyltransferase (Alkalilimnicola ehrlichii (strain ATCC BAA-1101 / DSM 17681 / MLHE-1)).